Here is a 190-residue protein sequence, read N- to C-terminus: MTAVGVQAQRPLGQRQPRRSFFESFIRTLIITCVALAVVLSSVSICDGHWLLAEDRLFGLWHFCTTTNQTICFRDLGQAHVPGLAVGMGLVRSVGALAVVAAIFGLEFLMVSQLCEDKHSQCKWVMGSILLLVSFVLSSGGLLGFVILLRNQVTLIGFTLMFWCEFTASFLLFLNAISGLHINSITHPWE.

The next 4 helical transmembrane spans lie at 25 to 45 (FIRT…SVSI), 96 to 116 (ALAV…QLCE), 131 to 151 (LLVS…LLRN), and 155 to 175 (LIGF…LFLN).

This sequence belongs to the PMP-22/EMP/MP20 family. CACNG subfamily. As to quaternary structure, the L-type calcium channel is composed of five subunits: alpha-1, alpha-2/delta, beta and gamma.

Its subcellular location is the membrane. In terms of biological role, thought to stabilize the calcium channel in an inactivated (closed) state. Modulates calcium current when coexpressed with CACNA1G. The sequence is that of Voltage-dependent calcium channel gamma-like subunit from Homo sapiens (Human).